The chain runs to 157 residues: Endoribonuclease YbeY (157 aa).

Residues His121, His125, and Asp131 each coordinate Zn(2+).

The protein belongs to the endoribonuclease YbeY family. Zn(2+) serves as cofactor.

Its subcellular location is the cytoplasm. Its function is as follows. Single strand-specific metallo-endoribonuclease involved in late-stage 70S ribosome quality control and in maturation of the 3' terminus of the 16S rRNA. The sequence is that of Endoribonuclease YbeY from Salinibacter ruber (strain DSM 13855 / M31).